The following is a 316-amino-acid chain: 4-hydroxy-3-methylbut-2-enyl diphosphate reductase (316 aa).

Cys-12 serves as a coordination point for [4Fe-4S] cluster. The (2E)-4-hydroxy-3-methylbut-2-enyl diphosphate site is built by His-43 and His-81. Dimethylallyl diphosphate is bound by residues His-43 and His-81. Residues His-43 and His-81 each contribute to the isopentenyl diphosphate site. Cys-103 is a binding site for [4Fe-4S] cluster. Position 131 (His-131) interacts with (2E)-4-hydroxy-3-methylbut-2-enyl diphosphate. His-131 contributes to the dimethylallyl diphosphate binding site. Residue His-131 coordinates isopentenyl diphosphate. Catalysis depends on Glu-133, which acts as the Proton donor. Position 170 (Thr-170) interacts with (2E)-4-hydroxy-3-methylbut-2-enyl diphosphate. Cys-198 serves as a coordination point for [4Fe-4S] cluster. (2E)-4-hydroxy-3-methylbut-2-enyl diphosphate contacts are provided by Ser-226, Asn-228, and Ser-271. Dimethylallyl diphosphate-binding residues include Ser-226, Asn-228, and Ser-271. Isopentenyl diphosphate contacts are provided by Ser-226, Asn-228, and Ser-271.

Belongs to the IspH family. [4Fe-4S] cluster is required as a cofactor.

It carries out the reaction isopentenyl diphosphate + 2 oxidized [2Fe-2S]-[ferredoxin] + H2O = (2E)-4-hydroxy-3-methylbut-2-enyl diphosphate + 2 reduced [2Fe-2S]-[ferredoxin] + 2 H(+). The enzyme catalyses dimethylallyl diphosphate + 2 oxidized [2Fe-2S]-[ferredoxin] + H2O = (2E)-4-hydroxy-3-methylbut-2-enyl diphosphate + 2 reduced [2Fe-2S]-[ferredoxin] + 2 H(+). The protein operates within isoprenoid biosynthesis; dimethylallyl diphosphate biosynthesis; dimethylallyl diphosphate from (2E)-4-hydroxy-3-methylbutenyl diphosphate: step 1/1. It participates in isoprenoid biosynthesis; isopentenyl diphosphate biosynthesis via DXP pathway; isopentenyl diphosphate from 1-deoxy-D-xylulose 5-phosphate: step 6/6. Its function is as follows. Catalyzes the conversion of 1-hydroxy-2-methyl-2-(E)-butenyl 4-diphosphate (HMBPP) into a mixture of isopentenyl diphosphate (IPP) and dimethylallyl diphosphate (DMAPP). Acts in the terminal step of the DOXP/MEP pathway for isoprenoid precursor biosynthesis. In Geobacillus thermodenitrificans (strain NG80-2), this protein is 4-hydroxy-3-methylbut-2-enyl diphosphate reductase.